The sequence spans 345 residues: N-acetyl-gamma-glutamyl-phosphate reductase (345 aa).

The active site involves C142.

It belongs to the NAGSA dehydrogenase family. Type 1 subfamily.

It localises to the cytoplasm. The enzyme catalyses N-acetyl-L-glutamate 5-semialdehyde + phosphate + NADP(+) = N-acetyl-L-glutamyl 5-phosphate + NADPH + H(+). The protein operates within amino-acid biosynthesis; L-arginine biosynthesis; N(2)-acetyl-L-ornithine from L-glutamate: step 3/4. Its function is as follows. Catalyzes the NADPH-dependent reduction of N-acetyl-5-glutamyl phosphate to yield N-acetyl-L-glutamate 5-semialdehyde. The sequence is that of N-acetyl-gamma-glutamyl-phosphate reductase from Thermus thermophilus (strain ATCC BAA-163 / DSM 7039 / HB27).